Reading from the N-terminus, the 200-residue chain is MIFKQEDFKVFDEQTLDGRMQGIRSVIDPKFEQLAKVILPLLSEDGQAWYAHIAKHLRRTTNPPENTWVAFAPNKRGYKMMPHYEVGMWDDHVYIYLAVEENMKPVSTQKIVAQMTKARELVARLPATFTLSQDHMVNKTEPLTLTHYDLAVQKFAETKHSEVLIGLQIMKSDYETLSFEDTNHIMATFKALRAIYEIIK.

It belongs to the UPF0637 family.

This is UPF0637 protein LCK_01372 from Leuconostoc citreum (strain KM20).